A 349-amino-acid chain; its full sequence is MEEILKSFKISIDNEGYSKSFSLEDLDNFNNNNNNNNNNNNNEENNPYEFFERYGFLVIRNVISEEDCNKTVGEIFDIIESKVKTFDRNDQSTWDQTFSEDGSSIPQYGSPSKPPIFKKQFLMNRTNPNVYKVFSKLLKNQDLMVNHDRACFFRPTLVNPKWKTNDNVHLDMNPYNWMGNGDICREELSKLTYARLGEFIVENNQPTQNDGLQLQGVINLLDNQELDGGYCVTPGFHTIFNEYFTSKKPQYTSPSWNFDKKDIAFKYAKRISMRKGSIVVWNQQMPHGSMSNKSFNPRMAQFIKIFPTSTVNSVRYQHRKNQIKSIIENSDELKDFPLNQISSQLLGLN.

2-oxoglutarate-binding positions include K118 and 169 to 171 (HLD). Positions 169 and 171 each coordinate Fe cation.

This sequence belongs to the PhyH family. Fe cation serves as cofactor. It depends on L-ascorbate as a cofactor.

It carries out the reaction phytanoyl-CoA + 2-oxoglutarate + O2 = 2-hydroxyphytanoyl-CoA + succinate + CO2. It functions in the pathway lipid metabolism; fatty acid metabolism. In terms of biological role, converts phytanoyl-CoA to 2-hydroxyphytanoyl-CoA. This Dictyostelium discoideum (Social amoeba) protein is Putative phytanoyl-CoA dioxygenase.